The following is a 501-amino-acid chain: Glutamate--tRNA ligase (501 aa).

The 'HIGH' region signature appears at 10 to 20 (PSPTGSLHIGG). The 'KMSKS' region signature appears at 251–255 (KLSKR). Lysine 254 serves as a coordination point for ATP.

This sequence belongs to the class-I aminoacyl-tRNA synthetase family. Glutamate--tRNA ligase type 1 subfamily. As to quaternary structure, monomer.

It localises to the cytoplasm. It catalyses the reaction tRNA(Glu) + L-glutamate + ATP = L-glutamyl-tRNA(Glu) + AMP + diphosphate. In terms of biological role, catalyzes the attachment of glutamate to tRNA(Glu) in a two-step reaction: glutamate is first activated by ATP to form Glu-AMP and then transferred to the acceptor end of tRNA(Glu). The chain is Glutamate--tRNA ligase from Desulforudis audaxviator (strain MP104C).